The primary structure comprises 66 residues: Large ribosomal subunit protein uL29 (66 aa).

Belongs to the universal ribosomal protein uL29 family.

The sequence is that of Large ribosomal subunit protein uL29 from Methylibium petroleiphilum (strain ATCC BAA-1232 / LMG 22953 / PM1).